The following is a 107-amino-acid chain: Nucleoid-associated protein A1C_06705 (107 aa).

This sequence belongs to the YbaB/EbfC family. As to quaternary structure, homodimer.

Its subcellular location is the cytoplasm. The protein localises to the nucleoid. In terms of biological role, binds to DNA and alters its conformation. May be involved in regulation of gene expression, nucleoid organization and DNA protection. The protein is Nucleoid-associated protein A1C_06705 of Rickettsia akari (strain Hartford).